We begin with the raw amino-acid sequence, 450 residues long: Divalent metal cation transporter MntH (450 aa).

The next 11 membrane-spanning stretches (helical) occupy residues 34-54, 61-81, 108-128, 141-161, 170-190, 212-232, 263-283, 305-325, 361-381, 383-403, and 422-442; these read LSFL…GNWI, AQYG…AMLL, IAII…IAEV, IPLI…LFIM, AIVG…VYIS, GILY…NLYL, IQLS…ASLF, PVLG…ALLA, SLAV…AAKI, QLLV…LIPL, and VNII…YLIV.

The protein belongs to the NRAMP family.

The protein resides in the cell membrane. In terms of biological role, h(+)-stimulated, divalent metal cation uptake system. The sequence is that of Divalent metal cation transporter MntH from Staphylococcus aureus (strain Mu3 / ATCC 700698).